The following is a 177-amino-acid chain: Protein GrpE (177 aa).

2 stretches are compositionally biased toward basic and acidic residues: residues 1–19 and 29–41; these read MAKH…KETV and SPEK…ANER. The interval 1 to 41 is disordered; the sequence is MAKHKHEEHPEDVEVKETVETAEQAESASPEKSELELANER.

The protein belongs to the GrpE family. In terms of assembly, homodimer.

It localises to the cytoplasm. Participates actively in the response to hyperosmotic and heat shock by preventing the aggregation of stress-denatured proteins, in association with DnaK and GrpE. It is the nucleotide exchange factor for DnaK and may function as a thermosensor. Unfolded proteins bind initially to DnaJ; upon interaction with the DnaJ-bound protein, DnaK hydrolyzes its bound ATP, resulting in the formation of a stable complex. GrpE releases ADP from DnaK; ATP binding to DnaK triggers the release of the substrate protein, thus completing the reaction cycle. Several rounds of ATP-dependent interactions between DnaJ, DnaK and GrpE are required for fully efficient folding. The protein is Protein GrpE of Streptococcus gordonii (strain Challis / ATCC 35105 / BCRC 15272 / CH1 / DL1 / V288).